Reading from the N-terminus, the 431-residue chain is Acetylornithine aminotransferase (431 aa).

Pyridoxal 5'-phosphate-binding positions include 118–119 (GA) and phenylalanine 157. Residue arginine 160 participates in N(2)-acetyl-L-ornithine binding. 251–254 (DEVQ) is a binding site for pyridoxal 5'-phosphate. Lysine 284 carries the N6-(pyridoxal phosphate)lysine modification. Serine 313 provides a ligand contact to N(2)-acetyl-L-ornithine. Residue threonine 314 coordinates pyridoxal 5'-phosphate.

It belongs to the class-III pyridoxal-phosphate-dependent aminotransferase family. ArgD subfamily. Homodimer. Pyridoxal 5'-phosphate serves as cofactor.

The protein localises to the cytoplasm. It carries out the reaction N(2)-acetyl-L-ornithine + 2-oxoglutarate = N-acetyl-L-glutamate 5-semialdehyde + L-glutamate. It functions in the pathway amino-acid biosynthesis; L-arginine biosynthesis; N(2)-acetyl-L-ornithine from L-glutamate: step 4/4. This chain is Acetylornithine aminotransferase, found in Bifidobacterium longum (strain NCC 2705).